Reading from the N-terminus, the 468-residue chain is Pituitary adenylate cyclase-activating polypeptide type I receptor (468 aa).

Positions 1–20 (MAGVVHVSLAALLLLPMAPA) are cleaved as a signal peptide. Residues 21–152 (MHSDCIFKKE…TGDQDYYYLS (132 aa)) are Extracellular-facing. Cystine bridges form between C34–C63, C54–C118, and C77–C134. Residues N48, N60, and N117 are each glycosylated (N-linked (GlcNAc...) asparagine). The tract at residues 125–139 (EPFPHYFDACGFDEY) is important for ADCYAP1/PACAP ligand binding and specificity. A helical transmembrane segment spans residues 153–177 (VKALYTVGYSTSLVTLTTAMVILCR). Residues 178-187 (FRKLHCTRNF) lie on the Cytoplasmic side of the membrane. The helical transmembrane segment at 188–208 (IHMNLFVSFMLRAISVFIKDW) threads the bilayer. The Extracellular segment spans residues 209 to 223 (ILYAEQDSNHCFIST). Residues 224-249 (VECKAVMVFFHYCVVSNYFWLFIEGL) form a helical membrane-spanning segment. A disulfide bridge connects residues C226 and C296. Residues 250–267 (YLFTLLVETFFPERRYFY) are Cytoplasmic-facing. A helical transmembrane segment spans residues 268-290 (WYTIIGWGTPTVCVTVWATLRLY). Residues 291-302 (FDDTGCWDMNDS) lie on the Extracellular side of the membrane. N-linked (GlcNAc...) asparagine glycosylation is present at N300. The helical transmembrane segment at 303-329 (TALWWVIKGPVVGSIMVNFVLFIGIIV) threads the bilayer. The Cytoplasmic segment spans residues 330-347 (ILVQKLQSPDMGGNESSI). A helical membrane pass occupies residues 348–374 (YLRLARSTLLLIPLFGIHYTVFAFSPE). A glycan (N-linked (GlcNAc...) asparagine) is linked at N375. Residues 375-379 (NVSKR) lie on the Extracellular side of the membrane. The helical transmembrane segment at 380–403 (ERLVFELGLGSFQGFVVAVLYCFL) threads the bilayer. Over 404 to 468 (NGEVQAEIKR…SGLPADNLAT (65 aa)) the chain is Cytoplasmic. 2 positions are modified to phosphoserine: S434 and S447.

This sequence belongs to the G-protein coupled receptor 2 family. As to quaternary structure, interacts with maxadilan, a vasodilator peptide from Lutzomyia longipalpis saliva; the interaction results in ADCYAP1R1 activation. In terms of tissue distribution, most abundant in the brain, low expression in the lung, liver, thymus, spleen, pancreas and placenta.

The protein resides in the cell membrane. Its activity is regulated as follows. Several synthetic peptides derived from maxadilan, a vasodilator peptide from Lutzomyia longipalpis saliva, act as antagonists for ADCYAP1R1. G protein-coupled receptor activated by the neuropeptide pituitary adenylate cyclase-activating polypeptide (ADCYAP1/PACAP). Binds both PACAP27 and PACAP38 bioactive peptides. Ligand binding causes a conformation change that triggers signaling via guanine nucleotide-binding proteins (G proteins) and modulates the activity of downstream effectors. Activates cAMP-dependent pathway. May regulate the release of adrenocorticotropin, luteinizing hormone, growth hormone, prolactin, epinephrine, and catecholamine. May play a role in spermatogenesis and sperm motility. Causes smooth muscle relaxation and secretion in the gastrointestinal tract. This Homo sapiens (Human) protein is Pituitary adenylate cyclase-activating polypeptide type I receptor.